Here is a 216-residue protein sequence, read N- to C-terminus: Vascular endothelial growth factor A (216 aa).

The signal sequence occupies residues methionine 1–alanine 26. Cystine bridges form between cysteine 52/cysteine 94, cysteine 83/cysteine 128, and cysteine 87/cysteine 130. N-linked (GlcNAc...) asparagine glycosylation occurs at asparagine 101. Residues proline 132–glutamate 141 are compositionally biased toward basic and acidic residues. The disordered stretch occupies residues proline 132 to histidine 167. Positions lysine 142–tyrosine 161 are enriched in basic residues.

This sequence belongs to the PDGF/VEGF growth factor family. In terms of assembly, homodimer; disulfide-linked. Also found as heterodimer with PGF.

In terms of biological role, growth factor active in angiogenesis, vasculogenesis and endothelial cell growth. Induces endothelial cell proliferation, promotes cell migration, inhibits apoptosis and induces permeabilization of blood vessels. Binds to the FLT1/VEGFR1 and KDR/VEGFR2 receptors, heparan sulfate and heparin. The polypeptide is Vascular endothelial growth factor A (VEGFA) (Gallus gallus (Chicken)).